Here is an 87-residue protein sequence, read N- to C-terminus: Envelope glycoprotein N (87 aa).

An N-terminal signal peptide occupies residues 1–24 (MGSITASFILITMQILFFCEDSSG). Over 25-48 (EPNFAERNFWHASCSARGVYIDGS) the chain is Virion surface. The chain crosses the membrane as a helical span at residues 49–69 (MITTLFFYASLLGVCVALISL). The Intravirion segment spans residues 70-87 (AYHACFRLFTRSVLRSTW).

Belongs to the herpesviridae glycoprotein N family. In terms of assembly, interacts (via N-terminus) with gM (via N-terminus). The gM-gN heterodimer forms the gCII complex.

The protein localises to the virion membrane. It is found in the host membrane. Its subcellular location is the host Golgi apparatus. The protein resides in the host trans-Golgi network. Functionally, envelope glycoprotein necessary for proper maturation of gM and modulation of its membrane fusion activity. Also plays a critical role in virion morphogenesis. This is Envelope glycoprotein N from Varicella-zoster virus (strain Dumas) (HHV-3).